Here is a 394-residue protein sequence, read N- to C-terminus: Elongation factor Tu (394 aa).

A tr-type G domain is found at 10–204 (KPHVNVGTIG…AMDDYIPAPE (195 aa)). The tract at residues 19 to 26 (GHVDHGKT) is G1. 19–26 (GHVDHGKT) is a binding site for GTP. Residue T26 participates in Mg(2+) binding. The segment at 60–64 (GITIN) is G2. A G3 region spans residues 81–84 (DCPG). GTP contacts are provided by residues 81-85 (DCPGH) and 136-139 (NKCD). A G4 region spans residues 136 to 139 (NKCD). Residues 174 to 176 (SAL) are G5.

Belongs to the TRAFAC class translation factor GTPase superfamily. Classic translation factor GTPase family. EF-Tu/EF-1A subfamily. As to quaternary structure, monomer.

The protein resides in the cytoplasm. It carries out the reaction GTP + H2O = GDP + phosphate + H(+). Its function is as follows. GTP hydrolase that promotes the GTP-dependent binding of aminoacyl-tRNA to the A-site of ribosomes during protein biosynthesis. This Francisella tularensis subsp. tularensis (strain FSC 198) protein is Elongation factor Tu.